Consider the following 550-residue polypeptide: Cytochrome P450 monooxygenase FFUJ_09176 (550 aa).

The N-terminal stretch at 1–31 is a signal peptide; the sequence is MLQTIPMPSRELTIALAVLSLLMVLVQRAGS. Over residues 430–441 the composition is skewed to basic and acidic residues; sequence FIPERFEGDTRS. Positions 430–451 are disordered; that stretch reads FIPERFEGDTRSSQESAASPDV. Heme is bound at residue cysteine 466.

The protein belongs to the cytochrome P450 family.

Functionally, cytochrome P450 monooxygenase; part of the DMATS1 gene cluster that mediates the biosynthesis of a reversely N-prenylated monomeric L-tryptophan (r-N-DMAT). Seems not to contribute to the final DMATS1 product. The chain is Cytochrome P450 monooxygenase FFUJ_09176 from Gibberella fujikuroi (strain CBS 195.34 / IMI 58289 / NRRL A-6831) (Bakanae and foot rot disease fungus).